Here is a 262-residue protein sequence, read N- to C-terminus: Thiazole synthase (262 aa).

Catalysis depends on Lys-97, which acts as the Schiff-base intermediate with DXP. 1-deoxy-D-xylulose 5-phosphate is bound by residues Gly-158, 185–186 (AG), and 207–208 (NT).

Belongs to the ThiG family. Homotetramer. Forms heterodimers with either ThiH or ThiS.

It localises to the cytoplasm. The enzyme catalyses [ThiS sulfur-carrier protein]-C-terminal-Gly-aminoethanethioate + 2-iminoacetate + 1-deoxy-D-xylulose 5-phosphate = [ThiS sulfur-carrier protein]-C-terminal Gly-Gly + 2-[(2R,5Z)-2-carboxy-4-methylthiazol-5(2H)-ylidene]ethyl phosphate + 2 H2O + H(+). The protein operates within cofactor biosynthesis; thiamine diphosphate biosynthesis. Its function is as follows. Catalyzes the rearrangement of 1-deoxy-D-xylulose 5-phosphate (DXP) to produce the thiazole phosphate moiety of thiamine. Sulfur is provided by the thiocarboxylate moiety of the carrier protein ThiS. In vitro, sulfur can be provided by H(2)S. The chain is Thiazole synthase from Neisseria gonorrhoeae (strain ATCC 700825 / FA 1090).